Reading from the N-terminus, the 395-residue chain is Methylthioribose-1-phosphate isomerase (395 aa).

Asp258 serves as the catalytic Proton donor.

Belongs to the eIF-2B alpha/beta/delta subunits family. MtnA subfamily.

Its subcellular location is the cytoplasm. It is found in the nucleus. It carries out the reaction 5-(methylsulfanyl)-alpha-D-ribose 1-phosphate = 5-(methylsulfanyl)-D-ribulose 1-phosphate. Its pathway is amino-acid biosynthesis; L-methionine biosynthesis via salvage pathway; L-methionine from S-methyl-5-thio-alpha-D-ribose 1-phosphate: step 1/6. Its function is as follows. Catalyzes the interconversion of methylthioribose-1-phosphate (MTR-1-P) into methylthioribulose-1-phosphate (MTRu-1-P). This Podospora anserina (strain S / ATCC MYA-4624 / DSM 980 / FGSC 10383) (Pleurage anserina) protein is Methylthioribose-1-phosphate isomerase.